Consider the following 99-residue polypeptide: Orphan antixoxin protein TacA (99 aa).

The protein belongs to the TacA antitoxin family.

Its function is as follows. Putative antitoxin component of a toxin-antitoxin (TA) system; its cognate toxin (usually a tRNA acetylase) is unknown. This is Orphan antixoxin protein TacA from Haemophilus influenzae (strain ATCC 51907 / DSM 11121 / KW20 / Rd).